A 492-amino-acid chain; its full sequence is Cytoplasmic dynein 1 light intermediate chain 2 (492 aa).

Residue 61 to 68 (GEDGSGKT) coordinates ATP. Disordered regions lie at residues 187–206 (PEEG…SGSD), 371–423 (AKQP…KNNA), and 437–492 (LSKK…ENEA). The residue at position 194 (Ser194) is a Phosphoserine. A compositionally biased stretch (polar residues) spans 371–381 (AKQPATPTRAS). A phosphoserine mark is found at Ser383 and Ser391. Position 397 is an omega-N-methylarginine (Arg397). Over residues 400-412 (PASVPSSSPGTSV) the composition is skewed to low complexity. Thr441 carries the phosphothreonine modification. A phosphoserine mark is found at Ser443 and Ser446. A compositionally biased stretch (polar residues) spans 452-469 (VQSTAKKSGQKTVLSNVQ). Residues 471-480 (ELDRMTRKPD) show a composition bias toward basic and acidic residues. The segment covering 482–492 (MVTNSSTENEA) has biased composition (polar residues).

This sequence belongs to the dynein light intermediate chain family. In terms of assembly, homodimer. The cytoplasmic dynein 1 complex consists of two catalytic heavy chains (HCs) and a number of non-catalytic subunits presented by intermediate chains (ICs), light intermediate chains (LICs) and light chains (LCs); the composition seems to vary in respect to the IC, LIC and LC composition. The heavy chain homodimer serves as a scaffold for the probable homodimeric assembly of the respective non-catalytic subunits. The ICs and LICs bind directly to the HC dimer and the LCs assemble on the IC dimer. Interacts with DYNC1H1; DYNC1LI1 and DYNC1LI2 bind mutually exclusive to DYNC1H.

It localises to the cytoplasm. The protein localises to the cytoskeleton. Acts as one of several non-catalytic accessory components of the cytoplasmic dynein 1 complex that are thought to be involved in linking dynein to cargos and to adapter proteins that regulate dynein function. Cytoplasmic dynein 1 acts as a motor for the intracellular retrograde motility of vesicles and organelles along microtubules. May play a role in binding dynein to membranous organelles or chromosomes. In Homo sapiens (Human), this protein is Cytoplasmic dynein 1 light intermediate chain 2.